Reading from the N-terminus, the 513-residue chain is Xyloglucan 6-xylosyltransferase 4 (513 aa).

Over 1 to 39 the chain is Cytoplasmic; it reads MFQDGSRSSGSGRGLSTTAVSNGGWRTRGFLRGWQIQNT. A helical; Signal-anchor for type II membrane protein transmembrane segment spans residues 40 to 60; sequence LFNNIKFMILCCFVTILILLG. Residues 61–513 lie on the Lumenal side of the membrane; sequence TIRVGNLGSS…IRRMHMETKP (453 aa). Residues Asn-76, Asn-110, Asn-142, Asn-174, and Asn-490 are each glycosylated (N-linked (GlcNAc...) asparagine).

The protein belongs to the glycosyltransferase 34 family.

It is found in the golgi apparatus membrane. The catalysed reaction is Transfers an alpha-D-xylosyl residue from UDP-D-xylose to a glucose residue in xyloglucan, forming an alpha-(1-&gt;6)-D-xylosyl-D-glucose linkage.. Its function is as follows. Xylosyltransferase specific to UDP-D-xylose that accepts cellohexaose as substrate to produce xyloglucan. The protein is Xyloglucan 6-xylosyltransferase 4 of Arabidopsis thaliana (Mouse-ear cress).